A 302-amino-acid polypeptide reads, in one-letter code: Aspartate carbamoyltransferase catalytic subunit (302 aa).

Carbamoyl phosphate is bound by residues Arg-51 and Thr-52. Lys-80 lines the L-aspartate pocket. Arg-101, His-129, and Gln-132 together coordinate carbamoyl phosphate. Residues Arg-162 and Arg-224 each coordinate L-aspartate. The carbamoyl phosphate site is built by Leu-263 and Pro-264.

The protein belongs to the aspartate/ornithine carbamoyltransferase superfamily. ATCase family. In terms of assembly, heterododecamer (2C3:3R2) of six catalytic PyrB chains organized as two trimers (C3), and six regulatory PyrI chains organized as three dimers (R2).

The catalysed reaction is carbamoyl phosphate + L-aspartate = N-carbamoyl-L-aspartate + phosphate + H(+). Its pathway is pyrimidine metabolism; UMP biosynthesis via de novo pathway; (S)-dihydroorotate from bicarbonate: step 2/3. Functionally, catalyzes the condensation of carbamoyl phosphate and aspartate to form carbamoyl aspartate and inorganic phosphate, the committed step in the de novo pyrimidine nucleotide biosynthesis pathway. The polypeptide is Aspartate carbamoyltransferase catalytic subunit (Azobacteroides pseudotrichonymphae genomovar. CFP2).